The following is a 77-amino-acid chain: Small ribosomal subunit protein bS20 (77 aa).

The protein belongs to the bacterial ribosomal protein bS20 family.

Its function is as follows. Binds directly to 16S ribosomal RNA. In Lactococcus lactis subsp. lactis (strain IL1403) (Streptococcus lactis), this protein is Small ribosomal subunit protein bS20.